A 66-amino-acid polypeptide reads, in one-letter code: U1-theraphotoxin-Cg1d 2 (66 aa).

The signal sequence occupies residues 1-21 (MKMSALFPIFGLPLLFCNSFA). The propeptide occupies 22–29 (AELKATGR). Cystine bridges form between Cys31-Cys46, Cys38-Cys51, and Cys45-Cys58. Position 63 is a proline amide (Pro63).

Belongs to the neurotoxin 10 (Hwtx-1) family. 46 (Jztx-7/10/12) subfamily. In terms of tissue distribution, expressed by the venom gland.

The protein resides in the secreted. In terms of biological role, probable ion channel inhibitor. This chain is U1-theraphotoxin-Cg1d 2, found in Chilobrachys guangxiensis (Chinese earth tiger tarantula).